Reading from the N-terminus, the 232-residue chain is RNA chaperone ProQ (232 aa).

Residues 105–182 (EAKARVQAQR…REEQHTPVSD (78 aa)) are disordered. Basic and acidic residues-rich tracts occupy residues 117–138 (QQAK…PPRE) and 147–177 (RRKE…EEQH).

This sequence belongs to the ProQ family.

The protein localises to the cytoplasm. In terms of biological role, RNA chaperone with significant RNA binding, RNA strand exchange and RNA duplexing activities. May regulate ProP activity through an RNA-based, post-transcriptional mechanism. The sequence is that of RNA chaperone ProQ from Escherichia coli O139:H28 (strain E24377A / ETEC).